Consider the following 117-residue polypeptide: Large ribosomal subunit protein bL19 (117 aa).

This sequence belongs to the bacterial ribosomal protein bL19 family.

Functionally, this protein is located at the 30S-50S ribosomal subunit interface and may play a role in the structure and function of the aminoacyl-tRNA binding site. The protein is Large ribosomal subunit protein bL19 of Paenarthrobacter aurescens (strain TC1).